The sequence spans 70 residues: Large ribosomal subunit protein bL31 (70 aa).

Residues cysteine 16, cysteine 18, cysteine 37, and cysteine 40 each coordinate Zn(2+).

This sequence belongs to the bacterial ribosomal protein bL31 family. Type A subfamily. In terms of assembly, part of the 50S ribosomal subunit. Requires Zn(2+) as cofactor.

Binds the 23S rRNA. This is Large ribosomal subunit protein bL31 from Saccharophagus degradans (strain 2-40 / ATCC 43961 / DSM 17024).